The sequence spans 873 residues: Probable beta-glucosidase A (873 aa).

The N-terminal stretch at 1–19 (MRFGWLEVAALTAASVANA) is a signal peptide. 3 N-linked (GlcNAc...) asparagine glycosylation sites follow: Asn71, Asn222, and Asn263. The active site involves Asp291. 9 N-linked (GlcNAc...) asparagine glycosylation sites follow: Asn326, Asn333, Asn365, Asn453, Asn534, Asn553, Asn575, Asn679, and Asn725. The disordered stretch occupies residues 731–764 (DSSDDPNYGWQDSEYIPEGARDGSPQPLLKAGGA).

It belongs to the glycosyl hydrolase 3 family.

The protein resides in the secreted. It carries out the reaction Hydrolysis of terminal, non-reducing beta-D-glucosyl residues with release of beta-D-glucose.. It participates in glycan metabolism; cellulose degradation. Functionally, beta-glucosidases are one of a number of cellulolytic enzymes involved in the degradation of cellulosic biomass. Catalyzes the last step releasing glucose from the inhibitory cellobiose. This Aspergillus fumigatus (strain ATCC MYA-4609 / CBS 101355 / FGSC A1100 / Af293) (Neosartorya fumigata) protein is Probable beta-glucosidase A (bglA).